The primary structure comprises 213 residues: Orotate phosphoribosyltransferase (213 aa).

Residue K26 participates in 5-phospho-alpha-D-ribose 1-diphosphate binding. Position 34–35 (34–35 (FF)) interacts with orotate. 5-phospho-alpha-D-ribose 1-diphosphate-binding positions include 72 to 73 (YK), R99, K100, K103, H105, and 124 to 132 (DDVITAGTA). Orotate-binding residues include T128 and R156.

It belongs to the purine/pyrimidine phosphoribosyltransferase family. PyrE subfamily. In terms of assembly, homodimer. The cofactor is Mg(2+).

The enzyme catalyses orotidine 5'-phosphate + diphosphate = orotate + 5-phospho-alpha-D-ribose 1-diphosphate. It participates in pyrimidine metabolism; UMP biosynthesis via de novo pathway; UMP from orotate: step 1/2. Catalyzes the transfer of a ribosyl phosphate group from 5-phosphoribose 1-diphosphate to orotate, leading to the formation of orotidine monophosphate (OMP). The polypeptide is Orotate phosphoribosyltransferase (Pseudomonas syringae pv. tomato (strain ATCC BAA-871 / DC3000)).